A 121-amino-acid polypeptide reads, in one-letter code: Piercer of microtubule wall 2 protein (121 aa).

Positions 1-10 are enriched in basic and acidic residues; the sequence is MTDRNRDKKS. Residues 1 to 29 are disordered; it reads MTDRNRDKKSTSPSNSDTEMKSEQLPPCV.

This sequence belongs to the PIERCE2 family. Microtubule inner protein component of sperm flagellar doublet microtubules. Interacts with CFAP53, ODAD1 and ODAD3; the interactions link the outer dynein arms docking complex (ODA-DC) to the internal microtubule inner proteins (MIP) in cilium axoneme. Expressed in airway epithelial cells.

It localises to the cytoplasm. Its subcellular location is the cytoskeleton. The protein resides in the cilium axoneme. It is found in the flagellum axoneme. Functionally, microtubule inner protein involved in the attachment of outer dynein arms (ODAs) to dynein-decorated doublet microtubules (DMTs) in cilia axoneme, which is required for motile cilia beating. The sequence is that of Piercer of microtubule wall 2 protein from Homo sapiens (Human).